The chain runs to 133 residues: U6 snRNA-associated Sm-like protein LSm1 (133 aa).

Residues 5–80 enclose the Sm domain; it reads PGTASLIEDI…VVLLGEIDLE (76 aa). Ser-123 carries the phosphoserine modification. Thr-129 bears the Phosphothreonine mark.

This sequence belongs to the snRNP Sm proteins family. As to quaternary structure, interacts with SLBP; interaction with SLBP occurs when histone mRNA is being rapidly degraded during the S phase. LSm subunits form a heteromer with a donut shape.

The protein resides in the cytoplasm. The protein localises to the P-body. In terms of biological role, plays a role in the degradation of histone mRNAs, the only eukaryotic mRNAs that are not polyadenylated. Probably also part of an LSm subunits-containing complex involved in the general process of mRNA degradation. The sequence is that of U6 snRNA-associated Sm-like protein LSm1 (LSM1) from Homo sapiens (Human).